The primary structure comprises 961 residues: Glycine dehydrogenase (decarboxylating) (961 aa).

Lysine 709 bears the N6-(pyridoxal phosphate)lysine mark.

It belongs to the GcvP family. In terms of assembly, the glycine cleavage system is composed of four proteins: P, T, L and H. The cofactor is pyridoxal 5'-phosphate.

It carries out the reaction N(6)-[(R)-lipoyl]-L-lysyl-[glycine-cleavage complex H protein] + glycine + H(+) = N(6)-[(R)-S(8)-aminomethyldihydrolipoyl]-L-lysyl-[glycine-cleavage complex H protein] + CO2. In terms of biological role, the glycine cleavage system catalyzes the degradation of glycine. The P protein binds the alpha-amino group of glycine through its pyridoxal phosphate cofactor; CO(2) is released and the remaining methylamine moiety is then transferred to the lipoamide cofactor of the H protein. The protein is Glycine dehydrogenase (decarboxylating) of Streptomyces griseus subsp. griseus (strain JCM 4626 / CBS 651.72 / NBRC 13350 / KCC S-0626 / ISP 5235).